A 473-amino-acid chain; its full sequence is Exodeoxyribonuclease I (473 aa).

In terms of domain architecture, Exonuclease spans Ile9 to Ala188. Asp11, Glu13, and Asp182 together coordinate Mg(2+). Position 13 (Glu13) interacts with substrate. Residues Pro198–Arg353 form the ExoI SH3-like domain. One can recognise an ExoI C-terminal domain in the interval Ala356–Leu472.

As to quaternary structure, monomer. Interacts with ssb (via C-terminus); this interaction stimulates the exonuclease activity by recruiting the enzyme to its substrate. Mg(2+) is required as a cofactor.

It carries out the reaction Exonucleolytic cleavage in the 3'- to 5'-direction to yield nucleoside 5'-phosphates.. Functionally, degrades single-stranded DNA (ssDNA) in a highly processive manner. Also functions as a DNA deoxyribophosphodiesterase that releases deoxyribose-phosphate moieties following the cleavage of DNA at an apurinic/apyrimidinic (AP) site by either an AP endonuclease or AP lyase. Involved in genome maintenance but probably not in phase variation, which contributes to the virulence and disease. This is Exodeoxyribonuclease I (sbcB) from Haemophilus influenzae (strain ATCC 51907 / DSM 11121 / KW20 / Rd).